The primary structure comprises 373 residues: S-adenosylmethionine:tRNA ribosyltransferase-isomerase (373 aa).

This sequence belongs to the QueA family. Monomer.

Its subcellular location is the cytoplasm. It carries out the reaction 7-aminomethyl-7-carbaguanosine(34) in tRNA + S-adenosyl-L-methionine = epoxyqueuosine(34) in tRNA + adenine + L-methionine + 2 H(+). It functions in the pathway tRNA modification; tRNA-queuosine biosynthesis. Transfers and isomerizes the ribose moiety from AdoMet to the 7-aminomethyl group of 7-deazaguanine (preQ1-tRNA) to give epoxyqueuosine (oQ-tRNA). This Rhizobium etli (strain CIAT 652) protein is S-adenosylmethionine:tRNA ribosyltransferase-isomerase.